A 106-amino-acid chain; its full sequence is MIAKVFKSITPESYILLVNAGLISAYGVRIIFQSVKNDEGKVDEKAHIGIGHFFKKRGAQLVDGKNLTDILKEKKKKKKKKKKINISNKLIIFKISRQLYSKLKLK.

A helical transmembrane segment spans residues 15–32 (ILLVNAGLISAYGVRIIF).

The protein localises to the cell membrane. Its function is as follows. Involved in starvation response and aggregation stage of the life cycle. May be involved in fruiting body morphogenesis and spore formation. This chain is Starvation responsive small protein A, found in Dictyostelium discoideum (Social amoeba).